Consider the following 157-residue polypeptide: Putative gamma-glutamylcyclotransferase CG2811 (157 aa).

Tyr-14 to Leu-17 serves as a coordination point for substrate. The active-site Proton acceptor is the Glu-89.

Belongs to the gamma-glutamylcyclotransferase family.

Functionally, putative gamma-glutamylcyclotransferase. The polypeptide is Putative gamma-glutamylcyclotransferase CG2811 (Drosophila melanogaster (Fruit fly)).